The chain runs to 132 residues: Small ribosomal subunit protein uS8c (132 aa).

The protein belongs to the universal ribosomal protein uS8 family. As to quaternary structure, part of the 30S ribosomal subunit.

It is found in the plastid. Its subcellular location is the chloroplast. One of the primary rRNA binding proteins, it binds directly to 16S rRNA central domain where it helps coordinate assembly of the platform of the 30S subunit. The sequence is that of Small ribosomal subunit protein uS8c (rps8) from Physcomitrium patens (Spreading-leaved earth moss).